Here is a 305-residue protein sequence, read N- to C-terminus: Acetylglutamate kinase (305 aa).

Substrate is bound by residues 67 to 68 (GG), arginine 89, and asparagine 190.

Belongs to the acetylglutamate kinase family. ArgB subfamily.

It is found in the cytoplasm. The catalysed reaction is N-acetyl-L-glutamate + ATP = N-acetyl-L-glutamyl 5-phosphate + ADP. The protein operates within amino-acid biosynthesis; L-arginine biosynthesis; N(2)-acetyl-L-ornithine from L-glutamate: step 2/4. Catalyzes the ATP-dependent phosphorylation of N-acetyl-L-glutamate. In Bifidobacterium longum subsp. infantis (strain ATCC 15697 / DSM 20088 / JCM 1222 / NCTC 11817 / S12), this protein is Acetylglutamate kinase.